Consider the following 107-residue polypeptide: Insulin (107 aa).

Positions Met1–Ala24 are cleaved as a signal peptide. 3 disulfides stabilise this stretch: Cys31–Cys93, Cys43–Cys106, and Cys92–Cys97. A propeptide spans Asp57–Val84 (c peptide).

This sequence belongs to the insulin family. As to quaternary structure, heterodimer of a B chain and an A chain linked by two disulfide bonds.

It localises to the secreted. Its function is as follows. Insulin decreases blood glucose concentration. It increases cell permeability to monosaccharides, amino acids and fatty acids. It accelerates glycolysis, the pentose phosphate cycle, and glycogen synthesis in liver. In Gallus gallus (Chicken), this protein is Insulin (INS).